The chain runs to 558 residues: Formate--tetrahydrofolate ligase (558 aa).

66–73 (TPAGEGKT) is a binding site for ATP.

It belongs to the formate--tetrahydrofolate ligase family.

The enzyme catalyses (6S)-5,6,7,8-tetrahydrofolate + formate + ATP = (6R)-10-formyltetrahydrofolate + ADP + phosphate. It functions in the pathway one-carbon metabolism; tetrahydrofolate interconversion. This chain is Formate--tetrahydrofolate ligase, found in Clostridium kluyveri (strain NBRC 12016).